We begin with the raw amino-acid sequence, 88 residues long: Small ribosomal subunit protein bS20 (88 aa).

A disordered region spans residues Lys69–Gly88. Basic residues predominate over residues Thr71–Gly88.

This sequence belongs to the bacterial ribosomal protein bS20 family.

Binds directly to 16S ribosomal RNA. This Pelotomaculum thermopropionicum (strain DSM 13744 / JCM 10971 / SI) protein is Small ribosomal subunit protein bS20.